Consider the following 221-residue polypeptide: Intraflagellar transport-associated protein (221 aa).

Serine 59 is modified (phosphoserine).

Interacts with IFT122; the interaction associates IFTAP with IFT-A complex.

In terms of biological role, seems to play a role in ciliary BBSome localization, maybe through interaction with IFT-A complex. This Homo sapiens (Human) protein is Intraflagellar transport-associated protein.